The sequence spans 701 residues: Probable cytosolic oligopeptidase A (701 aa).

A2 is subject to N-acetylalanine. Residues 148-194 (IALEDDKREEFNKIEQELEKLSHKFSENVLDATKKFEKLITDKKEIE) are a coiled coil. H483 contacts Zn(2+). The active site involves E484. 2 residues coordinate Zn(2+): H487 and E513. Residue 615–621 (HIFAGGY) coordinates substrate.

The protein belongs to the peptidase M3 family. The cofactor is Zn(2+).

It is found in the cytoplasm. It localises to the cytosol. It catalyses the reaction Hydrolysis of oligopeptides, with broad specificity. Gly or Ala commonly occur as P1 or P1' residues, but more distant residues are also important, as is shown by the fact that Z-Gly-Pro-Gly-|-Gly-Pro-Ala is cleaved, but not Z-(Gly)(5).. Inhibited by salicylic acid. Its function is as follows. Oligopeptidase that may be involved in the degradation of proteasome-generated peptides. Binds salicylic acid. This Arabidopsis thaliana (Mouse-ear cress) protein is Probable cytosolic oligopeptidase A.